The sequence spans 304 residues: Protein translocase subunit SecF (304 aa).

6 helical membrane-spanning segments follow: residues 20–40, 143–163, 164–184, 195–215, 244–266, and 276–298; these read AKLF…LIFT, AMMA…IRFE, LIFA…TLGF, TVVA…IVVF, LSRT…IFGG, and LVIG…VYLI.

The protein belongs to the SecD/SecF family. SecF subfamily. In terms of assembly, forms a complex with SecD. Part of the essential Sec protein translocation apparatus which comprises SecA, SecYEG and auxiliary proteins SecDF. Other proteins may also be involved.

The protein resides in the cell inner membrane. Its function is as follows. Part of the Sec protein translocase complex. Interacts with the SecYEG preprotein conducting channel. SecDF uses the proton motive force (PMF) to complete protein translocation after the ATP-dependent function of SecA. This is Protein translocase subunit SecF from Calditerrivibrio nitroreducens (strain DSM 19672 / NBRC 101217 / Yu37-1).